A 332-amino-acid chain; its full sequence is Small ribosomal subunit protein uS2 (332 aa).

The protein belongs to the universal ribosomal protein uS2 family.

The sequence is that of Small ribosomal subunit protein uS2 from Afipia carboxidovorans (strain ATCC 49405 / DSM 1227 / KCTC 32145 / OM5) (Oligotropha carboxidovorans).